Here is a 203-residue protein sequence, read N- to C-terminus: MGAEKITSKIVEDANKNAEKILAEALNEKEAILTEAKEEASKKEQAIAKKGEKDAEMTKNRILAEARLSAKKKLLEEREKTIQLTLEKLEEDLVKLPQKEDYKDILLKLIISGVYSVGGGELELLLNKKDFELIDDSTLWALEKEMEDRLKKVTVLKKGEAKSIIGGCIIKTADQTKVSDNSLEATFERNLDSVRAKIAEMLF.

The protein belongs to the V-ATPase E subunit family. As to quaternary structure, has multiple subunits with at least A(3), B(3), C, D, E, F, H, I and proteolipid K(x).

The protein resides in the cell membrane. Component of the A-type ATP synthase that produces ATP from ADP in the presence of a proton gradient across the membrane. The protein is A-type ATP synthase subunit E of Methanococcus maripaludis (strain DSM 14266 / JCM 13030 / NBRC 101832 / S2 / LL).